We begin with the raw amino-acid sequence, 177 residues long: RNA silencing suppressor (177 aa).

As to quaternary structure, homooctamer. The eight monomers assemble into a closed ring that binds RNA.

It localises to the host cytoplasm. Acts as a suppressor of RNA-mediated gene silencing, also known as post-transcriptional gene silencing (PTGS), a mechanism of plant viral defense that limits the accumulation of viral RNAs. Binds to ssRNAs and dsRNAs in vitro. Also functions as a replication enhancer. The polypeptide is RNA silencing suppressor (Beta vulgaris (Sugar beet)).